Consider the following 314-residue polypeptide: Homeobox protein DBX1-A (314 aa).

A DNA-binding region (homeobox) is located at residues 175 to 234 (GMLRRAVFSDVQRKALEKMFQKQKYISKPDRKKLAAKLGLKDSQVKIWFQNRRMKWRNSK). Disordered regions lie at residues 234 to 279 (KERE…CAPS) and 292 to 314 (STDSSITFKHSDFSESEDEITVS). The segment covering 258–267 (DLSDVGKKSS) has biased composition (basic and acidic residues). Acidic residues predominate over residues 305–314 (SESEDEITVS).

The protein belongs to the H2.0 homeobox family.

It localises to the nucleus. The sequence is that of Homeobox protein DBX1-A (dbx1a) from Danio rerio (Zebrafish).